The primary structure comprises 243 residues: Ribonuclease 3 (243 aa).

Residues 19–144 (FNTLHKLLGF…LVGAIYLDRG (126 aa)) form the RNase III domain. A Mg(2+)-binding site is contributed by Glu61. Asp65 is a catalytic residue. Residues Asn130 and Glu133 each coordinate Mg(2+). Residue Glu133 is part of the active site. A DRBM domain is found at 172-240 (SYKSLLIEWC…SKRAYYALQN (69 aa)).

The protein belongs to the ribonuclease III family. Homodimer. The cofactor is Mg(2+).

It localises to the cytoplasm. The enzyme catalyses Endonucleolytic cleavage to 5'-phosphomonoester.. In terms of biological role, digests double-stranded RNA. Involved in the processing of primary rRNA transcript to yield the immediate precursors to the large and small rRNAs (23S and 16S). Processes some mRNAs, and tRNAs when they are encoded in the rRNA operon. Processes pre-crRNA and tracrRNA of type II CRISPR loci if present in the organism. The sequence is that of Ribonuclease 3 (rnc) from Zunongwangia profunda (strain DSM 18752 / CCTCC AB 206139 / SM-A87) (Wangia profunda).